Consider the following 21-residue polypeptide: Fibrinogen beta chain (21 aa).

Gln1 carries the pyrrolidone carboxylic acid modification. Positions 1–11 (QPSYDYDEEED) are enriched in acidic residues. The disordered stretch occupies residues 1–21 (QPSYDYDEEEDDRAKLRLDAR). Tyr6 carries the sulfotyrosine modification. Over residues 12-21 (DRAKLRLDAR) the composition is skewed to basic and acidic residues.

As to quaternary structure, heterohexamer; disulfide linked. Contains 2 sets of 3 non-identical chains (alpha, beta and gamma). The 2 heterotrimers are in head to head conformation with the N-termini in a small central domain. Conversion of fibrinogen to fibrin is triggered by thrombin, which cleaves fibrinopeptides A and B from alpha and beta chains, and thus exposes the N-terminal polymerization sites responsible for the formation of the soft clot.

The protein resides in the secreted. Cleaved by the protease thrombin to yield monomers which, together with fibrinogen alpha (FGA) and fibrinogen gamma (FGG), polymerize to form an insoluble fibrin matrix. Fibrin has a major function in hemostasis as one of the primary components of blood clots. In addition, functions during the early stages of wound repair to stabilize the lesion and guide cell migration during re-epithelialization. Was originally thought to be essential for platelet aggregation, based on in vitro studies using anticoagulated blood. However subsequent studies have shown that it is not absolutely required for thrombus formation in vivo. Enhances expression of SELP in activated platelets. Maternal fibrinogen is essential for successful pregnancy. Fibrin deposition is also associated with infection, where it protects against IFNG-mediated hemorrhage. May also facilitate the antibacterial immune response via both innate and T-cell mediated pathways. This Antilocapra americana (Pronghorn) protein is Fibrinogen beta chain (FGB).